The primary structure comprises 462 residues: O-methyltransferase CTB2 (462 aa).

S-adenosyl-L-methionine is bound at residue aspartate 289. The active-site Proton acceptor is histidine 340.

This sequence belongs to the class I-like SAM-binding methyltransferase superfamily. Cation-independent O-methyltransferase family. COMT subfamily.

Its pathway is mycotoxin biosynthesis. Functionally, O-methyltransferase; part of the gene cluster that mediates the biosynthesis of cercosporin, a light-activated, non-host-selective toxin. The perylenequinone chromophore of cercosporin absorbs light energy to attain an electronically-activated triplet state and produces active oxygen species such as the hydroxyl radical, superoxide, hydrogen peroxide or singlet oxygen upon reaction with oxygen molecules. These reactive oxygen species cause damage to various cellular components including lipids, proteins and nucleic acids. The first step of cercosporin biosynthesis is performed by the polyketide synthase CTB1 which catalyzes the formation of nor-toralactone. The starter unit acyltransferase (SAT) domain of CTB1 initiates polyketide extension by the selective utilization of acetyl-CoA, which is elongated to the heptaketide in the beta-ketoacyl synthase (KS) domain by successive condensations with six malonyl units introduced by the malonyl acyltransferase (MAT) domain. The product template (PT) domain catalyzes C4-C9 and C2-C11 aldol cyclizations and dehydrations to a trihydroxynaphthalene, which is thought to be delivered to the thioesterase (TE) domain for product release. The bifunctional enzyme CTB3 then methylates nor-toralactone to toralactone before conducting an unusual oxidative aromatic ring opening. The O-methyltransferase CTB2 further methylates the nascent OH-6 of the CBT3 product, blocking further oxidation at this site before the reductase CTB6 reduces the 2-oxopropyl ketone at position C7, giving naphthalene. The FAD-dependent monooxygenase CTB5 in concert with the multicopper oxidase CTB12 are responsible for homodimerization of naphthalene with CTB7 installing the dioxepine moiety, finally producing cercosporin. The fasciclin domain-containing protein CTB11 might act with CTB5 and CTB12 whereas the roles of CTB9 and CTB10 have still to be elucidated. In Cercospora beticola (Sugarbeet leaf spot fungus), this protein is O-methyltransferase CTB2.